The primary structure comprises 336 residues: tRNA N6-adenosine threonylcarbamoyltransferase (336 aa).

Residues His-114 and His-118 each coordinate Fe cation. Substrate-binding positions include Leu-136–Gly-140, Asp-169, Gly-182, Asp-186, and Asn-275. Asp-301 contributes to the Fe cation binding site.

The protein belongs to the KAE1 / TsaD family. Requires Fe(2+) as cofactor.

Its subcellular location is the cytoplasm. It catalyses the reaction L-threonylcarbamoyladenylate + adenosine(37) in tRNA = N(6)-L-threonylcarbamoyladenosine(37) in tRNA + AMP + H(+). In terms of biological role, required for the formation of a threonylcarbamoyl group on adenosine at position 37 (t(6)A37) in tRNAs that read codons beginning with adenine. Is involved in the transfer of the threonylcarbamoyl moiety of threonylcarbamoyl-AMP (TC-AMP) to the N6 group of A37, together with TsaE and TsaB. TsaD likely plays a direct catalytic role in this reaction. In Streptococcus sanguinis (strain SK36), this protein is tRNA N6-adenosine threonylcarbamoyltransferase.